The primary structure comprises 283 residues: Bifunctional protein FolD (283 aa).

Residues 166-168 (GAS), Ser191, and Ile232 contribute to the NADP(+) site.

The protein belongs to the tetrahydrofolate dehydrogenase/cyclohydrolase family. In terms of assembly, homodimer.

It catalyses the reaction (6R)-5,10-methylene-5,6,7,8-tetrahydrofolate + NADP(+) = (6R)-5,10-methenyltetrahydrofolate + NADPH. The catalysed reaction is (6R)-5,10-methenyltetrahydrofolate + H2O = (6R)-10-formyltetrahydrofolate + H(+). Its pathway is one-carbon metabolism; tetrahydrofolate interconversion. Functionally, catalyzes the oxidation of 5,10-methylenetetrahydrofolate to 5,10-methenyltetrahydrofolate and then the hydrolysis of 5,10-methenyltetrahydrofolate to 10-formyltetrahydrofolate. This chain is Bifunctional protein FolD, found in Chromobacterium violaceum (strain ATCC 12472 / DSM 30191 / JCM 1249 / CCUG 213 / NBRC 12614 / NCIMB 9131 / NCTC 9757 / MK).